The primary structure comprises 422 residues: FAD-dependent monooxygenase ptmM (422 aa).

A helical transmembrane segment spans residues 8–24 (VIIVGGSIAGLTLAHCL). 5 residues coordinate FAD: Glu-35, Gly-49, Arg-108, Asp-308, and Ala-321.

The protein belongs to the paxM FAD-dependent monooxygenase family. The cofactor is FAD.

Its subcellular location is the membrane. The protein operates within secondary metabolite biosynthesis. Functionally, FAD-dependent monooxygenase; part of the gene cluster that mediates the biosynthesis of the indole diterpenes penitrems. The geranylgeranyl diphosphate (GGPP) synthase ptmG catalyzes the first step in penitrem biosynthesis via conversion of farnesyl pyrophosphate and isopentyl pyrophosphate into geranylgeranyl pyrophosphate (GGPP). Condensation of indole-3-glycerol phosphate with GGPP by the prenyl transferase ptmC then forms 3-geranylgeranylindole (3-GGI). Epoxidation by the FAD-dependent monooxygenase ptmM leads to a epoxidized-GGI that is substrate of the terpene cyclase ptmB for cyclization to yield paspaline. Paspaline is subsequently converted to 13-desoxypaxilline by the cytochrome P450 monooxygenase ptmP, the latter being then converted to paxilline by the cytochrome P450 monooxygenase ptmQ. Paxilline is converted to beta-paxitriol via C-10 ketoreduction by the short-chain dehydrogenase ptmH which can be monoprenylated at the C-20 by the indole diterpene prenyltransferase ptmD. A two-step elimination (acetylation and elimination) process performed by the O-acetyltransferase ptmV and ptmI leads to the production of the prenylated form of penijanthine. The FAD-linked oxidoreductase ptmO then converts the prenylated form of penijanthine into PC-M5 which is in turn transformed into PC-M4 by the aromatic dimethylallyltransferase ptmE. Five sequential oxidative transformations performed by the cytochrome P450 monooxygenases ptmK, ptmU, ptmL, ptmN and ptmJ yield the various penitrem compounds. PtmK, ptmU and ptmM are involved in the formation of the key bicyclic ring of penitrem C via the formation of the intermediates secopenitrem D and penitrem D. PtmL catalyzes the epoxidation of penitrem D and C to yield penitrem B and F, respectively. PtmJ catalyzes the last benzylic hydroxylation to convert penitrem B to prenitrem E and penitrem F to penitrem A. The chain is FAD-dependent monooxygenase ptmM from Penicillium ochrochloron.